The chain runs to 242 residues: Probable transcriptional regulatory protein XAC3151 (242 aa).

It belongs to the TACO1 family.

Its subcellular location is the cytoplasm. This is Probable transcriptional regulatory protein XAC3151 from Xanthomonas axonopodis pv. citri (strain 306).